The sequence spans 142 residues: MYKAIIMPVDVFEMELSDKAVRHAEFLAQDDGVIHLLHVLPGSASLSLHRFAADVRRFEEHLQHEAEERLQTMVSHFTIDPSRIKQHVRFGSVRDEVNELAEELGADVVVIGSRNPSISTHLLGSNASSVIRHANLPVLVVR.

This sequence belongs to the universal stress protein A family.

The sequence is that of Universal stress protein G (uspG) from Shigella flexneri.